The sequence spans 89 residues: MALTQERKTQLIQEFRTHENDTGSPEVQIAILTENINNLNGHLRTHKKDHHSRRGLLKMVGQRRNLLTYLREADVQRYRSVVDRLGLRR.

The protein belongs to the universal ribosomal protein uS15 family. In terms of assembly, part of the 30S ribosomal subunit. Forms a bridge to the 50S subunit in the 70S ribosome, contacting the 23S rRNA.

In terms of biological role, one of the primary rRNA binding proteins, it binds directly to 16S rRNA where it helps nucleate assembly of the platform of the 30S subunit by binding and bridging several RNA helices of the 16S rRNA. Forms an intersubunit bridge (bridge B4) with the 23S rRNA of the 50S subunit in the ribosome. The sequence is that of Small ribosomal subunit protein uS15 from Brevibacillus brevis (strain 47 / JCM 6285 / NBRC 100599).